The chain runs to 174 residues: Auxin-responsive protein IAA2 (174 aa).

The EAR-like (transcriptional repression) signature appears at 16–20 (LCLGL). Residues 44-67 (FEETRDEEESTPPTKTQIVGWPPV) form a disordered region. The PB1 domain occupies 77–164 (VSYVKVSMDG…SCKRLRIMKG (88 aa)).

Belongs to the Aux/IAA family. In terms of assembly, homodimers and heterodimers. Interacts with the auxin-responsive protein IAA1. Interacts with TPL. In terms of tissue distribution, preferentially expressed in vegetative organs.

It is found in the nucleus. Its function is as follows. Aux/IAA proteins are short-lived transcriptional factors that function as repressors of early auxin response genes at low auxin concentrations. Repression is thought to result from the interaction with auxin response factors (ARFs), proteins that bind to the auxin-responsive promoter element (AuxRE). Formation of heterodimers with ARF proteins may alter their ability to modulate early auxin response genes expression. In Arabidopsis thaliana (Mouse-ear cress), this protein is Auxin-responsive protein IAA2 (IAA2).